A 628-amino-acid polypeptide reads, in one-letter code: MEASRRSAVKPVIVLKPSKRFPLVEDTPGKASDALPLPLYLTNAVFFTLFFTVVYFLLSRWREKIRASIPLHAVTFPEIVAIFAFVASLIYLLGFFGIDFVQSLIIRPSGDVWSGEDYEEENEVLLHEEDARTVPCGQALDCSVPSLPHMARNVTAQRLFDEKPVRVATEEDARKVSCGQAVDCSLHSLPPRPPIVTSQKLFHEKTVIVTTEEDEEIIKSVVAGTLPSYSLESKLGDCKRAAAIRREALQRLTGRSLSGLPLDGFDYESILGQCCEMPVGYVQIPVGIAGPLLLNGREYSVPMATTEGCLVASTNRGCKAIHLSGGATSILLKDGMTRAPVVRFSTAKRAAELKFYLEDPENFDTLAVVFNRSSRFGRLQSIKCAIAGKNLYLRFTCSTGDAMGMNMVSKGVQNVLDFLQTDFPDMDVIGISGNFCSDKKPAAVNWIEGRGKSVVCEAIIEGDVVRKVLKTSVESLVELNMLKNLTGSAMAGALGGFNAHASNIVTAIYIATGQDPAQNVESSHCITMMEAVNDGKDLHISVTMPSIEVGTVGGGTQLASQSACLNLLGVKGASKDVAGANSRMLATIVTGAVLAGELSLMSALAAGQLVKSHMKYNRSSKDMSNLSS.

The next 2 membrane-spanning stretches (helical) occupy residues 38-58 (PLYLTNAVFFTLFFTVVYFLL) and 78-98 (EIVAIFAFVASLIYLLGFFGI). The tract at residues 99-212 (DFVQSLIIRP…HEKTVIVTTE (114 aa)) is linker. A glycan (N-linked (GlcNAc...) asparagine) is linked at asparagine 153. Positions 213–628 (EDEEIIKSVV…SSKDMSNLSS (416 aa)) are catalytic. Glutamate 307 acts as the Charge relay system in catalysis. N-linked (GlcNAc...) asparagine glycosylation is present at asparagine 371. Lysine 439 serves as the catalytic Charge relay system. The N-linked (GlcNAc...) asparagine glycan is linked to asparagine 484. Catalysis depends on aspartate 515, which acts as the Charge relay system. Histidine 613 (proton donor) is an active-site residue. N-linked (GlcNAc...) asparagine glycosylation is found at asparagine 617 and asparagine 625.

The protein belongs to the HMG-CoA reductase family.

Its subcellular location is the endoplasmic reticulum membrane. The protein resides in the mitochondrion membrane. The protein localises to the plastid membrane. It carries out the reaction (R)-mevalonate + 2 NADP(+) + CoA = (3S)-3-hydroxy-3-methylglutaryl-CoA + 2 NADPH + 2 H(+). The protein operates within metabolic intermediate biosynthesis; (R)-mevalonate biosynthesis; (R)-mevalonate from acetyl-CoA: step 3/3. In terms of biological role, catalyzes the synthesis of mevalonate. The specific precursor of all isoprenoid compounds present in plants. In Gossypium hirsutum (Upland cotton), this protein is 3-hydroxy-3-methylglutaryl-coenzyme A reductase 2 (HMG2).